Reading from the N-terminus, the 695-residue chain is Amphiphysin (695 aa).

Coiled coils occupy residues 10–83 (AKNV…SLHE) and 144–191 (DYDS…QEEL). Positions 24–240 (VLQKLGKADE…MTKLGDQHAD (217 aa)) constitute a BAR domain. 2 disordered regions span residues 244–312 (TIQG…VTPT) and 486–617 (GAPG…EASQ). Phosphoserine is present on Ser-252. The residue at position 260 (Thr-260) is a Phosphothreonine. A compositionally biased stretch (pro residues) spans 261 to 274 (PSPPEEPSPLPSPT). Phosphoserine occurs at positions 262, 268, 272, and 276. Position 280 is a phosphothreonine (Thr-280). A phosphoserine mark is found at Ser-506 and Ser-638. An SH3 domain is found at 622–695 (GFLYKVETLH…FPENFTRRLD (74 aa)).

In terms of assembly, heterodimer with BIN1. Binds SH3GLB1. Interacts with REPS1 and SGIP1. Binds AP2A2. Interacts with AP2B1. Interacts with DNM1 and SYNJ1. In terms of tissue distribution, neurons, certain endocrine cell types and spermatocytes.

It is found in the cytoplasmic vesicle. It localises to the secretory vesicle. The protein localises to the synaptic vesicle membrane. Its subcellular location is the cytoplasm. The protein resides in the cytoskeleton. In terms of biological role, may participate in mechanisms of regulated exocytosis in synapses and certain endocrine cell types. May control the properties of the membrane associated cytoskeleton. The protein is Amphiphysin (AMPH) of Homo sapiens (Human).